We begin with the raw amino-acid sequence, 185 residues long: Threonylcarbamoyl-AMP synthase (185 aa).

Residues 4 to 185 (SWRVQQAARE…LATGEIVRPG (182 aa)) form the YrdC-like domain.

The protein belongs to the SUA5 family. TsaC subfamily.

It localises to the cytoplasm. The enzyme catalyses L-threonine + hydrogencarbonate + ATP = L-threonylcarbamoyladenylate + diphosphate + H2O. Required for the formation of a threonylcarbamoyl group on adenosine at position 37 (t(6)A37) in tRNAs that read codons beginning with adenine. Catalyzes the conversion of L-threonine, HCO(3)(-)/CO(2) and ATP to give threonylcarbamoyl-AMP (TC-AMP) as the acyladenylate intermediate, with the release of diphosphate. The chain is Threonylcarbamoyl-AMP synthase from Pseudomonas putida (strain W619).